The primary structure comprises 303 residues: Aspartate carbamoyltransferase catalytic subunit (303 aa).

Carbamoyl phosphate-binding residues include arginine 51 and threonine 52. Residue lysine 80 coordinates L-aspartate. The carbamoyl phosphate site is built by arginine 101, histidine 129, and glutamine 132. Residues arginine 162 and arginine 221 each contribute to the L-aspartate site. Leucine 260 and proline 261 together coordinate carbamoyl phosphate.

The protein belongs to the aspartate/ornithine carbamoyltransferase superfamily. ATCase family. Heterooligomer of catalytic and regulatory chains.

The catalysed reaction is carbamoyl phosphate + L-aspartate = N-carbamoyl-L-aspartate + phosphate + H(+). The protein operates within pyrimidine metabolism; UMP biosynthesis via de novo pathway; (S)-dihydroorotate from bicarbonate: step 2/3. Functionally, catalyzes the condensation of carbamoyl phosphate and aspartate to form carbamoyl aspartate and inorganic phosphate, the committed step in the de novo pyrimidine nucleotide biosynthesis pathway. The polypeptide is Aspartate carbamoyltransferase catalytic subunit (Saccharolobus islandicus (strain M.14.25 / Kamchatka #1) (Sulfolobus islandicus)).